A 469-amino-acid chain; its full sequence is Mitochondrial distribution and morphology protein 10 (469 aa).

This sequence belongs to the MDM10 family. In terms of assembly, component of the ER-mitochondria encounter structure (ERMES) or MDM complex, composed of MMM1, MDM10, MDM12 and MDM34. Associates with the mitochondrial outer membrane sorting assembly machinery SAM(core) complex.

It is found in the mitochondrion outer membrane. In terms of biological role, component of the ERMES/MDM complex, which serves as a molecular tether to connect the endoplasmic reticulum and mitochondria. Components of this complex are involved in the control of mitochondrial shape and protein biogenesis and may function in phospholipid exchange. MDM10 is involved in the late assembly steps of the general translocase of the mitochondrial outer membrane (TOM complex). Functions in the TOM40-specific route of the assembly of outer membrane beta-barrel proteins, including the association of TOM40 with the receptor TOM22 and small TOM proteins. Can associate with the SAM(core) complex as well as the MDM12-MMM1 complex, both involved in late steps of the major beta-barrel assembly pathway, that is responsible for biogenesis of all outer membrane beta-barrel proteins. May act as a switch that shuttles between both complexes and channels precursor proteins into the TOM40-specific pathway. Plays a role in mitochondrial morphology and in the inheritance of mitochondria. This Scheffersomyces stipitis (strain ATCC 58785 / CBS 6054 / NBRC 10063 / NRRL Y-11545) (Yeast) protein is Mitochondrial distribution and morphology protein 10.